A 306-amino-acid polypeptide reads, in one-letter code: Glutaminase (306 aa).

The substrate site is built by Ser-61, Asn-111, Glu-155, Asn-162, Tyr-186, Tyr-238, and Val-256.

The protein belongs to the glutaminase family. In terms of assembly, homotetramer.

It catalyses the reaction L-glutamine + H2O = L-glutamate + NH4(+). This chain is Glutaminase, found in Pseudomonas entomophila (strain L48).